The sequence spans 272 residues: Tryptophan synthase alpha chain (272 aa).

Catalysis depends on proton acceptor residues Glu-49 and Asp-60.

Belongs to the TrpA family. In terms of assembly, tetramer of two alpha and two beta chains.

The catalysed reaction is (1S,2R)-1-C-(indol-3-yl)glycerol 3-phosphate + L-serine = D-glyceraldehyde 3-phosphate + L-tryptophan + H2O. The protein operates within amino-acid biosynthesis; L-tryptophan biosynthesis; L-tryptophan from chorismate: step 5/5. Its function is as follows. The alpha subunit is responsible for the aldol cleavage of indoleglycerol phosphate to indole and glyceraldehyde 3-phosphate. In Polaromonas naphthalenivorans (strain CJ2), this protein is Tryptophan synthase alpha chain.